A 357-amino-acid polypeptide reads, in one-letter code: Chorismate synthase (357 aa).

The segment covering 38–49 (EKDIQPDLDRRK) has biased composition (basic and acidic residues). Positions 38 to 60 (EKDIQPDLDRRKPGTSRYTTPRR) are disordered. The NADP(+) site is built by Arg-48 and Arg-54. FMN-binding positions include 125 to 127 (RSS), 243 to 244 (NA), Gly-283, 298 to 302 (KPTSS), and Arg-324.

Belongs to the chorismate synthase family. In terms of assembly, homotetramer. Requires FMNH2 as cofactor.

It catalyses the reaction 5-O-(1-carboxyvinyl)-3-phosphoshikimate = chorismate + phosphate. The protein operates within metabolic intermediate biosynthesis; chorismate biosynthesis; chorismate from D-erythrose 4-phosphate and phosphoenolpyruvate: step 7/7. Catalyzes the anti-1,4-elimination of the C-3 phosphate and the C-6 proR hydrogen from 5-enolpyruvylshikimate-3-phosphate (EPSP) to yield chorismate, which is the branch point compound that serves as the starting substrate for the three terminal pathways of aromatic amino acid biosynthesis. This reaction introduces a second double bond into the aromatic ring system. This chain is Chorismate synthase, found in Haemophilus influenzae (strain PittEE).